The following is a 158-amino-acid chain: Transcription elongation factor GreA (158 aa).

This sequence belongs to the GreA/GreB family.

Necessary for efficient RNA polymerase transcription elongation past template-encoded arresting sites. The arresting sites in DNA have the property of trapping a certain fraction of elongating RNA polymerases that pass through, resulting in locked ternary complexes. Cleavage of the nascent transcript by cleavage factors such as GreA or GreB allows the resumption of elongation from the new 3'terminus. GreA releases sequences of 2 to 3 nucleotides. This Macrococcus caseolyticus (strain JCSC5402) (Macrococcoides caseolyticum) protein is Transcription elongation factor GreA.